The sequence spans 75 residues: Exodeoxyribonuclease 7 small subunit (75 aa).

This sequence belongs to the XseB family. Heterooligomer composed of large and small subunits.

It is found in the cytoplasm. The enzyme catalyses Exonucleolytic cleavage in either 5'- to 3'- or 3'- to 5'-direction to yield nucleoside 5'-phosphates.. Bidirectionally degrades single-stranded DNA into large acid-insoluble oligonucleotides, which are then degraded further into small acid-soluble oligonucleotides. The polypeptide is Exodeoxyribonuclease 7 small subunit (Citrifermentans bemidjiense (strain ATCC BAA-1014 / DSM 16622 / JCM 12645 / Bem) (Geobacter bemidjiensis)).